The primary structure comprises 139 residues: Probable disulfide formation protein C 1 (139 aa).

A helical transmembrane segment spans residues 8 to 27; it reads EYALFTAWGASFIATLGSLY. C37 and C40 form a disulfide bridge. The next 2 membrane-spanning stretches (helical) occupy residues 42–61 and 68–85; these read YQRI…VVKK and YSLP…YHYV. A disulfide bridge links C99 with C104. The helical transmembrane segment at 113–135 threads the bilayer; sequence GFVTIPFLALIGFITIAVCSFIV.

This sequence belongs to the DsbB family. BdbC subfamily.

The protein localises to the cell membrane. Its function is as follows. Required for disulfide bond formation in some proteins. The sequence is that of Probable disulfide formation protein C 1 (bdbC1) from Bacillus anthracis.